Reading from the N-terminus, the 679-residue chain is Glycine--tRNA ligase beta subunit (679 aa).

This sequence belongs to the class-II aminoacyl-tRNA synthetase family. As to quaternary structure, tetramer of two alpha and two beta subunits.

Its subcellular location is the cytoplasm. The enzyme catalyses tRNA(Gly) + glycine + ATP = glycyl-tRNA(Gly) + AMP + diphosphate. The sequence is that of Glycine--tRNA ligase beta subunit from Streptococcus mutans serotype c (strain ATCC 700610 / UA159).